A 167-amino-acid polypeptide reads, in one-letter code: uncharacterized protein (167 aa).

The disordered stretch occupies residues 1–21 (MFDFSFPTPASAGTRMGPASC).

This is an uncharacterized protein from Homo sapiens (Human).